A 450-amino-acid polypeptide reads, in one-letter code: Probable helicase D10 (450 aa).

The Helicase ATP-binding domain occupies 95-240; it reads PIYEECDDTC…MFKDFFGYKI (146 aa). 108–115 is an ATP binding site; the sequence is GKPGFGKT. Positions 193–196 match the DEAH box motif; that stretch reads DEVH. The Helicase C-terminal domain occupies 289–439; that stretch reads NLAHLYVNMG…TITMTPEKAV (151 aa).

The catalysed reaction is ATP + H2O = ADP + phosphate + H(+). The sequence is that of Probable helicase D10 (D10) from Escherichia phage T5 (Enterobacteria phage T5).